We begin with the raw amino-acid sequence, 309 residues long: Mitochondrial import receptor subunit TOM34 (309 aa).

Residue Ser8 is modified to Phosphoserine. TPR repeat units lie at residues 9-42 (VEEL…LQAQ), 51-84 (SVLY…VPFS), and 86-118 (KPLL…DDNV). Residue Ser160 is modified to Phosphoserine. Residues 161-189 (LPSENHKEMAKSKSKETTATKNRVPSAGD) form a disordered region. Over residues 164-178 (ENHKEMAKSKSKETT) the composition is skewed to basic and acidic residues. Position 186 is a phosphoserine (Ser186). TPR repeat units follow at residues 193–226 (ARVL…SNLE), 227–260 (SATY…DGKN), and 262–294 (KAFY…EPRN). Lys197 is covalently cross-linked (Glycyl lysine isopeptide (Lys-Gly) (interchain with G-Cter in SUMO2)).

It belongs to the Tom34 family. In terms of assembly, interacts with HSP90A, VCP, ATP6V1D, KIAA0665, AMPK, and DMAP1 through its TPR repeat. As to expression, ubiquitous.

The protein localises to the cytoplasm. It is found in the mitochondrion outer membrane. Plays a role in the import of cytosolically synthesized preproteins into mitochondria. Binds the mature portion of precursor proteins. Interacts with cellular components, and possesses weak ATPase activity. May be a chaperone-like protein that helps to keep newly synthesized precursors in an unfolded import compatible state. The chain is Mitochondrial import receptor subunit TOM34 (TOMM34) from Homo sapiens (Human).